The sequence spans 747 residues: UPF0313 protein PA4928 (747 aa).

Residues Ala371–Lys640 form the Radical SAM core domain. [4Fe-4S] cluster-binding residues include Cys385, Cys389, and Cys392. Positions Gly670 to Arg747 are disordered.

It belongs to the UPF0313 family. [4Fe-4S] cluster is required as a cofactor.

In Pseudomonas aeruginosa (strain ATCC 15692 / DSM 22644 / CIP 104116 / JCM 14847 / LMG 12228 / 1C / PRS 101 / PAO1), this protein is UPF0313 protein PA4928.